A 278-amino-acid chain; its full sequence is S-formylglutathione hydrolase YeiG (278 aa).

Active-site charge relay system residues include S145, D223, and H256.

Belongs to the esterase D family.

The enzyme catalyses S-formylglutathione + H2O = formate + glutathione + H(+). Its function is as follows. Serine hydrolase involved in the detoxification of formaldehyde. Hydrolyzes S-formylglutathione to glutathione and formate. This chain is S-formylglutathione hydrolase YeiG (yeiG), found in Escherichia coli O6:K15:H31 (strain 536 / UPEC).